Reading from the N-terminus, the 254-residue chain is Triosephosphate isomerase (254 aa).

9 to 11 contributes to the substrate binding site; the sequence is NWK. His95 functions as the Electrophile in the catalytic mechanism. Catalysis depends on Glu167, which acts as the Proton acceptor. Substrate is bound by residues Gly173, Ser213, and 234–235; that span reads GG.

The protein belongs to the triosephosphate isomerase family. As to quaternary structure, homodimer.

The protein resides in the cytoplasm. It catalyses the reaction D-glyceraldehyde 3-phosphate = dihydroxyacetone phosphate. Its pathway is carbohydrate biosynthesis; gluconeogenesis. The protein operates within carbohydrate degradation; glycolysis; D-glyceraldehyde 3-phosphate from glycerone phosphate: step 1/1. Involved in the gluconeogenesis. Catalyzes stereospecifically the conversion of dihydroxyacetone phosphate (DHAP) to D-glyceraldehyde-3-phosphate (G3P). This chain is Triosephosphate isomerase, found in Roseiflexus castenholzii (strain DSM 13941 / HLO8).